A 208-amino-acid chain; its full sequence is Peptidyl-tRNA hydrolase 2 (208 aa).

Residues 32–45 (SNASSTKKSSATLL) are compositionally biased toward low complexity. A disordered region spans residues 32-81 (SNASSTKKSSATLLRSKEMKEGKLHNDTDEEESESEDESDEDEDIESTSL). The segment covering 46–58 (RSKEMKEGKLHND) has biased composition (basic and acidic residues). Positions 59 to 77 (TDEEESESEDESDEDEDIE) are enriched in acidic residues. A Glycyl lysine isopeptide (Lys-Gly) (interchain with G-Cter in ubiquitin) cross-link involves residue lysine 152.

The protein belongs to the PTH2 family.

It is found in the cytoplasm. The enzyme catalyses an N-acyl-L-alpha-aminoacyl-tRNA + H2O = an N-acyl-L-amino acid + a tRNA + H(+). Its function is as follows. The natural substrate for this enzyme may be peptidyl-tRNAs which drop off the ribosome during protein synthesis. This chain is Peptidyl-tRNA hydrolase 2, found in Saccharomyces cerevisiae (strain ATCC 204508 / S288c) (Baker's yeast).